Reading from the N-terminus, the 485-residue chain is NADH-quinone oxidoreductase subunit N (485 aa).

14 helical membrane passes run 8 to 28 (LIAL…MLSI), 35 to 55 (FLNA…LWFV), 71 to 91 (GFAM…CTFA), 105 to 125 (FYLL…ANHL), 127 to 147 (ALFL…GYAF), 159 to 179 (YTIL…LVYA), 203 to 223 (LLAG…LVPF), 235 to 255 (PAPV…GVVM), 271 to 291 (VVLG…ALSQ), 297 to 317 (LLGY…IALQ), 326 to 346 (VGVY…VVSL), 373 to 393 (AAVM…LGFI), 408 to 430 (WWLV…RVAV), and 455 to 475 (IVVL…QPLI).

The protein belongs to the complex I subunit 2 family. As to quaternary structure, NDH-1 is composed of 13 different subunits. Subunits NuoA, H, J, K, L, M, N constitute the membrane sector of the complex.

The protein resides in the cell inner membrane. The catalysed reaction is a quinone + NADH + 5 H(+)(in) = a quinol + NAD(+) + 4 H(+)(out). Its function is as follows. NDH-1 shuttles electrons from NADH, via FMN and iron-sulfur (Fe-S) centers, to quinones in the respiratory chain. The immediate electron acceptor for the enzyme in this species is believed to be ubiquinone. Couples the redox reaction to proton translocation (for every two electrons transferred, four hydrogen ions are translocated across the cytoplasmic membrane), and thus conserves the redox energy in a proton gradient. The chain is NADH-quinone oxidoreductase subunit N from Salmonella gallinarum (strain 287/91 / NCTC 13346).